A 202-amino-acid polypeptide reads, in one-letter code: Outer-membrane lipoprotein LolB (202 aa).

An N-terminal signal peptide occupies residues Met1–Gly24. A lipid anchor (N-palmitoyl cysteine) is attached at Cys25. Cys25 carries the S-diacylglycerol cysteine lipid modification.

This sequence belongs to the LolB family. As to quaternary structure, monomer.

It is found in the cell outer membrane. Its function is as follows. Plays a critical role in the incorporation of lipoproteins in the outer membrane after they are released by the LolA protein. The polypeptide is Outer-membrane lipoprotein LolB (Pseudoalteromonas translucida (strain TAC 125)).